Reading from the N-terminus, the 135-residue chain is Large ribosomal subunit protein uL16c (135 aa).

This sequence belongs to the universal ribosomal protein uL16 family. As to quaternary structure, part of the 50S ribosomal subunit.

Its subcellular location is the plastid. The protein localises to the chloroplast. This chain is Large ribosomal subunit protein uL16c, found in Morus indica (Mulberry).